The primary structure comprises 235 residues: Post-translational flagellin modification protein B (235 aa).

Belongs to the CMP-NeuNAc synthase family.

Functionally, required for biosynthesis of LAH modification in the post-translational modification of Campylobacter coli flagellin. The polypeptide is Post-translational flagellin modification protein B (ptmB) (Campylobacter coli).